The sequence spans 1343 residues: DNA-directed RNA polymerase subunit beta (1343 aa).

This sequence belongs to the RNA polymerase beta chain family. In terms of assembly, the RNAP catalytic core consists of 2 alpha, 1 beta, 1 beta' and 1 omega subunit. When a sigma factor is associated with the core the holoenzyme is formed, which can initiate transcription.

It catalyses the reaction RNA(n) + a ribonucleoside 5'-triphosphate = RNA(n+1) + diphosphate. DNA-dependent RNA polymerase catalyzes the transcription of DNA into RNA using the four ribonucleoside triphosphates as substrates. The protein is DNA-directed RNA polymerase subunit beta of Haemophilus influenzae (strain 86-028NP).